The chain runs to 502 residues: Probable glycerol kinase (502 aa).

Thr-11 lines the substrate pocket. Arg-15 lines the ATP pocket. Substrate is bound by residues Arg-85, Tyr-140, and Asp-246. ATP-binding positions include Thr-268, Gly-313, and 416–420 (GMIAN).

It belongs to the FGGY kinase family.

The enzyme catalyses glycerol + ATP = sn-glycerol 3-phosphate + ADP + H(+). The protein operates within polyol metabolism; glycerol degradation via glycerol kinase pathway; sn-glycerol 3-phosphate from glycerol: step 1/1. This is Probable glycerol kinase from Caenorhabditis elegans.